The primary structure comprises 602 residues: Elongation factor 4 (602 aa).

The region spanning 7 to 189 (KYIRNFSIVA…AIVNKVPAPD (183 aa)) is the tr-type G domain. Residues 19-24 (DHGKST) and 136-139 (NKID) contribute to the GTP site.

Belongs to the TRAFAC class translation factor GTPase superfamily. Classic translation factor GTPase family. LepA subfamily.

It is found in the cell membrane. It catalyses the reaction GTP + H2O = GDP + phosphate + H(+). Functionally, required for accurate and efficient protein synthesis under certain stress conditions. May act as a fidelity factor of the translation reaction, by catalyzing a one-codon backward translocation of tRNAs on improperly translocated ribosomes. Back-translocation proceeds from a post-translocation (POST) complex to a pre-translocation (PRE) complex, thus giving elongation factor G a second chance to translocate the tRNAs correctly. Binds to ribosomes in a GTP-dependent manner. In Clostridium botulinum (strain ATCC 19397 / Type A), this protein is Elongation factor 4.